The sequence spans 107 residues: uncharacterized protein (107 aa).

The HTH cro/C1-type domain maps to 13 to 68 (LQEEFLEPLSLKISDLAQILDVHRNTASNIVNNSSRITLEMAVKLAKVFDTTPEFW). A DNA-binding region (H-T-H motif) is located at residues 24–43 (KISDLAQILDVHRNTASNIV).

This sequence belongs to the VapA/VapI family.

This is an uncharacterized protein from Haemophilus influenzae (strain ATCC 51907 / DSM 11121 / KW20 / Rd).